A 235-amino-acid polypeptide reads, in one-letter code: MSIHIGAKEGQIAETILLPGDPLRAKFIAETFLENPVCYNEVRGMLGYTGTYKGKRISVQGTGMGVPSISIYVNELIRDYGVKNLIRVGTAGGMQEDIKVRDLVLAMSSHTDSAINKVRFNGLDFAPTASFKLLKAAYDTAVEKGYSPKVGSVFTADSFYNDNPEAWKQWAKFGTLAVEMETAALYTLAAKYGVNALTILTISDHLITAEETTSEERQTTFTKMMEVALDAAITL.

His-4 provides a ligand contact to a purine D-ribonucleoside. Phosphate-binding positions include Gly-20, Arg-24, Arg-43, and 87 to 90 (RVGT). A purine D-ribonucleoside-binding positions include 179-181 (EME) and 203-204 (SD). The Proton donor role is filled by Asp-204.

This sequence belongs to the PNP/UDP phosphorylase family. In terms of assembly, homohexamer; trimer of homodimers.

The enzyme catalyses a purine D-ribonucleoside + phosphate = a purine nucleobase + alpha-D-ribose 1-phosphate. It carries out the reaction a purine 2'-deoxy-D-ribonucleoside + phosphate = a purine nucleobase + 2-deoxy-alpha-D-ribose 1-phosphate. Its function is as follows. Catalyzes the reversible phosphorolytic breakdown of the N-glycosidic bond in the beta-(deoxy)ribonucleoside molecules, with the formation of the corresponding free purine bases and pentose-1-phosphate. This Clostridium perfringens (strain SM101 / Type A) protein is Purine nucleoside phosphorylase DeoD-type.